The chain runs to 343 residues: Biotin synthase (343 aa).

A Radical SAM core domain is found at 36–254; that stretch reads RQVQVSTLLS…IAVARIMMPR (219 aa). Positions 51, 55, and 58 each coordinate [4Fe-4S] cluster. [2Fe-2S] cluster contacts are provided by cysteine 95, cysteine 126, cysteine 186, and arginine 258.

This sequence belongs to the radical SAM superfamily. Biotin synthase family. Homodimer. The cofactor is [4Fe-4S] cluster. It depends on [2Fe-2S] cluster as a cofactor.

The catalysed reaction is (4R,5S)-dethiobiotin + (sulfur carrier)-SH + 2 reduced [2Fe-2S]-[ferredoxin] + 2 S-adenosyl-L-methionine = (sulfur carrier)-H + biotin + 2 5'-deoxyadenosine + 2 L-methionine + 2 oxidized [2Fe-2S]-[ferredoxin]. The protein operates within cofactor biosynthesis; biotin biosynthesis; biotin from 7,8-diaminononanoate: step 2/2. Catalyzes the conversion of dethiobiotin (DTB) to biotin by the insertion of a sulfur atom into dethiobiotin via a radical-based mechanism. This is Biotin synthase from Erwinia tasmaniensis (strain DSM 17950 / CFBP 7177 / CIP 109463 / NCPPB 4357 / Et1/99).